Reading from the N-terminus, the 122-residue chain is Ribosome-binding factor A (122 aa).

This sequence belongs to the RbfA family. As to quaternary structure, monomer. Binds 30S ribosomal subunits, but not 50S ribosomal subunits or 70S ribosomes.

It localises to the cytoplasm. One of several proteins that assist in the late maturation steps of the functional core of the 30S ribosomal subunit. Associates with free 30S ribosomal subunits (but not with 30S subunits that are part of 70S ribosomes or polysomes). Required for efficient processing of 16S rRNA. May interact with the 5'-terminal helix region of 16S rRNA. This Anaeromyxobacter sp. (strain Fw109-5) protein is Ribosome-binding factor A.